We begin with the raw amino-acid sequence, 293 residues long: Shikimate dehydrogenase (NADP(+)) (293 aa).

Residues 20–22 (SLT) and T72 each bind shikimate. K76 (proton acceptor) is an active-site residue. N97 and D112 together coordinate shikimate. NADP(+) is bound by residues 136-140 (GAGGA) and I230. Y232 lines the shikimate pocket. Residue G253 participates in NADP(+) binding.

This sequence belongs to the shikimate dehydrogenase family. Homodimer.

It carries out the reaction shikimate + NADP(+) = 3-dehydroshikimate + NADPH + H(+). It participates in metabolic intermediate biosynthesis; chorismate biosynthesis; chorismate from D-erythrose 4-phosphate and phosphoenolpyruvate: step 4/7. Functionally, involved in the biosynthesis of the chorismate, which leads to the biosynthesis of aromatic amino acids. Catalyzes the reversible NADPH linked reduction of 3-dehydroshikimate (DHSA) to yield shikimate (SA). This Arthrobacter sp. (strain FB24) protein is Shikimate dehydrogenase (NADP(+)).